Reading from the N-terminus, the 283-residue chain is Urease accessory protein UreD (283 aa).

Belongs to the UreD family. UreD, UreF and UreG form a complex that acts as a GTP-hydrolysis-dependent molecular chaperone, activating the urease apoprotein by helping to assemble the nickel containing metallocenter of UreC. The UreE protein probably delivers the nickel.

The protein localises to the cytoplasm. Its function is as follows. Required for maturation of urease via the functional incorporation of the urease nickel metallocenter. In Acaryochloris marina (strain MBIC 11017), this protein is Urease accessory protein UreD.